A 113-amino-acid chain; its full sequence is Large ribosomal subunit protein uL22 (113 aa).

It belongs to the universal ribosomal protein uL22 family. Part of the 50S ribosomal subunit.

In terms of biological role, this protein binds specifically to 23S rRNA; its binding is stimulated by other ribosomal proteins, e.g. L4, L17, and L20. It is important during the early stages of 50S assembly. It makes multiple contacts with different domains of the 23S rRNA in the assembled 50S subunit and ribosome. The globular domain of the protein is located near the polypeptide exit tunnel on the outside of the subunit, while an extended beta-hairpin is found that lines the wall of the exit tunnel in the center of the 70S ribosome. The sequence is that of Large ribosomal subunit protein uL22 from Anoxybacillus flavithermus (strain DSM 21510 / WK1).